The primary structure comprises 101 residues: Apolipoprotein C-II (101 aa).

Positions 1–17 (MGTRFLLALCLVLLVLG) are cleaved as a signal peptide. Residues 66–74 (AVDEKLRDL) are lipid binding. Positions 78 to 101 (STAAMSTYTGIFTDQVLSVLKGEE) are lipoprotein lipase cofactor.

It belongs to the apolipoprotein C2 family. Post-translationally, proapolipoprotein C-II is synthesized as a sialic acid containing glycoprotein which is subsequently desialylated prior to its proteolytic processing. In terms of processing, proapolipoprotein C-II, the major form found in plasma undergoes proteolytic cleavage of its N-terminal hexapeptide to generate apolipoprotein C-II, which occurs as the minor form in plasma.

The protein localises to the secreted. Functionally, component of chylomicrons, very low-density lipoproteins (VLDL), low-density lipoproteins (LDL), and high-density lipoproteins (HDL) in plasma. Plays an important role in lipoprotein metabolism as an activator of lipoprotein lipase. Both proapolipoprotein C-II and apolipoprotein C-II can activate lipoprotein lipase. The chain is Apolipoprotein C-II (APOC2) from Chlorocebus sabaeus (Green monkey).